A 708-amino-acid polypeptide reads, in one-letter code: MSERGIKWACEYCTYENWPSAIKCTMCRAQRPSGTIITEDPFKSGSSDVGRDWDPSSTEGGSSPLICPDSSARPRVKSSYSMENANKWSCHMCTYLNWPRAIRCTQCLSQRRTRSPTESPQSSGSGSRPVAFSVDPCEEYNDRNKLNTRTQHWTCSVCTYENWAKAKRCVVCDHPRPNNIEAIELAETEEASSIINEQDRARWRGSCSSGNSQRRSPPATKRDSEVKMDFQRIELAGAVGSKEELEVDFKKLKQIKNRMKKTDWLFLNACVGVVEGDLAAIEAYKSSGGDIARQLTADEVRLLNRPSAFDVGYTLVHLAIRFQRQDMLAILLTEVSQQAAKCIPAMVCPELTEQIRREIAASLHQRKGDFACYFLTDLVTFTLPADIEDLPPTVQEKLFDEVLDRDVQKELEEESPIINWSLELATRLDSRLYALWNRTAGDCLLDSVLQATWGIYDKDSVLRKALHDSLHDCSHWFYTRWKDWESWYSQSFGLHFSLREEQWQEDWAFILSLASQPGASLEQTHIFVLAHILRRPIIVYGVKYYKSFRGETLGYTRFQGVYLPLLWEQSFCWKSPIALGYTRGHFSALVAMENDGYGNRGAGANLNTDDDVTITFLPLVDSERKLLHVHFLSAQELGNEEQQEKLLREWLDCCVTEGGVLVAMQKSSRRRNHPLVTQMVEKWLDRYRQIRPCTSLSDGEEDEDDEDE.

Residues Glu-3–Ser-33 form a RanBP2-type 1 zinc finger. Zn(2+) contacts are provided by Cys-10, Cys-13, Cys-24, and Cys-27. A disordered region spans residues Thr-38–Arg-73. 2 RanBP2-type zinc fingers span residues Asn-84–Thr-113 and Arg-149–Asn-178. The Zn(2+) site is built by Cys-90, Cys-93, Cys-104, Cys-107, Cys-155, Cys-158, Cys-169, and Cys-172. The tract at residues Arg-200–Glu-225 is disordered. Over residues Ser-206–Arg-215 the composition is skewed to polar residues. ANK repeat units follow at residues Lys-260–Asp-290 and Tyr-313–Ala-340. The tract at residues Pro-392–Glu-641 is TRAF-binding. One can recognise an OTU domain in the interval Leu-432 to Met-592. Catalysis depends on Cys-443, which acts as the Nucleophile. His-585 serves as the catalytic Proton acceptor.

This sequence belongs to the peptidase C64 family. As to quaternary structure, interacts with TRAF6. Interacts with APC. As to expression, widely expressed.

Its subcellular location is the cytoplasm. It is found in the nucleus. It catalyses the reaction Thiol-dependent hydrolysis of ester, thioester, amide, peptide and isopeptide bonds formed by the C-terminal Gly of ubiquitin (a 76-residue protein attached to proteins as an intracellular targeting signal).. Functionally, ubiquitin thioesterase, which specifically hydrolyzes 'Lys-29'-linked and 'Lys-33'-linked diubiquitin. Also cleaves 'Lys-63'-linked chains, but with 40-fold less efficiency compared to 'Lys-29'-linked ones. Positive regulator of the Wnt signaling pathway that deubiquitinates APC protein, a negative regulator of Wnt-mediated transcription. Acts as a regulator of autophagy by mediating deubiquitination of PIK3C3/VPS34, thereby promoting autophagosome maturation. Plays a role in the regulation of cell morphology and cytoskeletal organization. Required in the stress fiber dynamics and cell migration. This Homo sapiens (Human) protein is Ubiquitin thioesterase ZRANB1.